The chain runs to 143 residues: Transcription antitermination protein NusB (143 aa).

This sequence belongs to the NusB family.

Involved in transcription antitermination. Required for transcription of ribosomal RNA (rRNA) genes. Binds specifically to the boxA antiterminator sequence of the ribosomal RNA (rrn) operons. This Mannheimia succiniciproducens (strain KCTC 0769BP / MBEL55E) protein is Transcription antitermination protein NusB.